The following is a 264-amino-acid chain: 3-methyl-2-oxobutanoate hydroxymethyltransferase (264 aa).

2 residues coordinate Mg(2+): aspartate 45 and aspartate 84. 3-methyl-2-oxobutanoate contacts are provided by residues 45–46 (DS), aspartate 84, and lysine 113. Glutamate 115 lines the Mg(2+) pocket. The active-site Proton acceptor is glutamate 182.

This sequence belongs to the PanB family. As to quaternary structure, homodecamer; pentamer of dimers. The cofactor is Mg(2+).

It localises to the cytoplasm. It catalyses the reaction 3-methyl-2-oxobutanoate + (6R)-5,10-methylene-5,6,7,8-tetrahydrofolate + H2O = 2-dehydropantoate + (6S)-5,6,7,8-tetrahydrofolate. It functions in the pathway cofactor biosynthesis; (R)-pantothenate biosynthesis; (R)-pantoate from 3-methyl-2-oxobutanoate: step 1/2. Its function is as follows. Catalyzes the reversible reaction in which hydroxymethyl group from 5,10-methylenetetrahydrofolate is transferred onto alpha-ketoisovalerate to form ketopantoate. The polypeptide is 3-methyl-2-oxobutanoate hydroxymethyltransferase (Caldicellulosiruptor bescii (strain ATCC BAA-1888 / DSM 6725 / KCTC 15123 / Z-1320) (Anaerocellum thermophilum)).